The primary structure comprises 804 residues: Leucine--tRNA ligase (804 aa).

A 'HIGH' region motif is present at residues 40 to 51; the sequence is PYPSGQGLHVGH. The 'KMSKS' region motif lies at 576 to 580; that stretch reads KMSKS. An ATP-binding site is contributed by lysine 579.

Belongs to the class-I aminoacyl-tRNA synthetase family.

It localises to the cytoplasm. It catalyses the reaction tRNA(Leu) + L-leucine + ATP = L-leucyl-tRNA(Leu) + AMP + diphosphate. This chain is Leucine--tRNA ligase, found in Enterococcus faecalis (strain ATCC 700802 / V583).